A 196-amino-acid chain; its full sequence is Ribosome-binding factor A (196 aa).

Belongs to the RbfA family. As to quaternary structure, monomer. Binds 30S ribosomal subunits, but not 50S ribosomal subunits or 70S ribosomes.

The protein localises to the cytoplasm. One of several proteins that assist in the late maturation steps of the functional core of the 30S ribosomal subunit. Associates with free 30S ribosomal subunits (but not with 30S subunits that are part of 70S ribosomes or polysomes). Required for efficient processing of 16S rRNA. May interact with the 5'-terminal helix region of 16S rRNA. The protein is Ribosome-binding factor A of Tropheryma whipplei (strain TW08/27) (Whipple's bacillus).